The chain runs to 376 residues: MAYTTFSQNKNDQLKEPMFFGQNVNVARYDQQKYETFEKLIEKQLSFFWRPEEVDVSQDRIDYAALPEHEKHIFISNLKYQTLLDSIQGRSPNVALLPLVSIPELETWIETWTFSETIHSRSYTHIIRNIVNDPSIVFDDIVTNEEIIKRAQDISSYYDDLIRDSQLYGLYGEGTYTVDGKECVVTLRSLKKQLYLCLMSVNALEAIRFYVSFACSFAFAERRLMEGNAKIIKFIARDEALHLTGTQHILNIMAAGQDDPEMAEIAEECKQEAYDLFVAAAEQEKAWADYLFKDGSMIGLNRDILVQYVEYITNIRMQAVGLPLPFQTRSNPIPWINAWLVSDNVQVAPQEVEVSSYLVGQIDSKVDTNDFDDFSL.

The Fe cation site is built by Asp-85, Glu-116, and His-119. Tyr-123 is an active-site residue. Positions 205, 239, and 242 each coordinate Fe cation.

The protein belongs to the ribonucleoside diphosphate reductase small chain family. Tetramer of two alpha and two beta subunits. Requires Fe cation as cofactor.

The catalysed reaction is a 2'-deoxyribonucleoside 5'-diphosphate + [thioredoxin]-disulfide + H2O = a ribonucleoside 5'-diphosphate + [thioredoxin]-dithiol. In terms of biological role, provides the precursors necessary for DNA synthesis. Catalyzes the biosynthesis of deoxyribonucleotides from the corresponding ribonucleotides. In Haemophilus influenzae (strain ATCC 51907 / DSM 11121 / KW20 / Rd), this protein is Ribonucleoside-diphosphate reductase subunit beta (nrdB).